Reading from the N-terminus, the 254-residue chain is Low affinity immunoglobulin gamma Fc region receptor III-A (254 aa).

The N-terminal stretch at 1–20 (MWQLLLPTALLLLVSAGMRA) is a signal peptide. Ig-like C2-type domains follow at residues 24–105 (PKAV…LEVH) and 107–189 (GWLL…VNIT). 2 cysteine pairs are disulfide-bonded: cysteine 47–cysteine 89 and cysteine 128–cysteine 172. The N-linked (GlcNAc...) asparagine glycan is linked to asparagine 187. Residues 207 to 229 (YQVSFCLVMVLLFAVDTGLYFSV) form a helical membrane-spanning segment. The disordered stretch occupies residues 234 to 254 (PSSTSDWKDHKFKWSKDPQDK). Residues 239 to 254 (DWKDHKFKWSKDPQDK) are compositionally biased toward basic and acidic residues.

Forms a heterooligomeric complex with ITAM-containing signaling subunits, either a homodimer of CD247, a homodimer of FCER1G or a heterodimer of CD247 and FCER1G, to form a functional receptor complex. Interacts (via transmembrane domain) with signaling subunits; this interaction is a prerequisite for receptor complex expression on the cell surface and intracellular signal transduction. Binds the Fc region of antigen-complexed IgG with a preference for IgG1 and IgG3 isotypes. Interacts with CD2; this interaction is involved in NK cell activation and cytotoxicity. Interacts with S100A4; this interaction inhibits PKC-dependent phosphorylation of FCGR3A. In terms of processing, glycosylated. Glycosylation plays an inhibitory role in the interaction with IgG1 and IgG2. Post-translationally, undergoes rapid ectodomain shedding upon NK cell stimulation. The soluble form is produced by a proteolytic cleavage mediated by ADAM17. Repeated stimulation causes receptor shedding, a mechanism that allows for increased NK cell motility and detachment from opsonized target cells while avoiding activation-induced NK cell apoptosis. Lymphocytes and monocytes.

Its subcellular location is the cell membrane. It localises to the secreted. Its function is as follows. Receptor for the invariable Fc fragment of immunoglobulin gamma (IgG). Optimally activated upon binding of clustered antigen-IgG complexes displayed on cell surfaces, triggers lysis of antibody-coated cells, a process known as antibody-dependent cellular cytotoxicity (ADCC). Does not bind free monomeric IgG, thus avoiding inappropriate effector cell activation in the absence of antigenic trigger. Mediates IgG effector functions on natural killer (NK) cells. Binds antigen-IgG complexes generated upon infection and triggers NK cell-dependent cytokine production and degranulation to limit viral load and propagation. Involved in the generation of memory-like adaptive NK cells capable to produce high amounts of IFNG and to efficiently eliminate virus-infected cells via ADCC. Regulates NK cell survival and proliferation, in particular by preventing NK cell progenitor apoptosis. Fc-binding subunit that associates with CD247 and/or FCER1G adapters to form functional signaling complexes. Following the engagement of antigen-IgG complexes, triggers phosphorylation of immunoreceptor tyrosine-based activation motif (ITAM)-containing adapters with subsequent activation of phosphatidylinositol 3-kinase signaling and sustained elevation of intracellular calcium that ultimately drive NK cell activation. The ITAM-dependent signaling coupled to receptor phosphorylation by PKC mediates robust intracellular calcium flux that leads to production of pro-inflammatory cytokines, whereas in the absence of receptor phosphorylation it mainly activates phosphatidylinositol 3-kinase signaling leading to cell degranulation. Costimulates NK cells and trigger lysis of target cells independently of IgG binding. Mediates the antitumor activities of therapeutic antibodies. Upon ligation on monocytes triggers TNFA-dependent ADCC of IgG-coated tumor cells. Mediates enhanced ADCC in response to afucosylated IgGs. The chain is Low affinity immunoglobulin gamma Fc region receptor III-A (FCGR3A) from Papio anubis (Olive baboon).